The chain runs to 80 residues: Conotoxin ArMKLT2-0321 (80 aa).

An N-terminal signal peptide occupies residues 1–21; that stretch reads MKLTCVLIIAMLFLIVCQLNT. Residues 22 to 48 constitute a propeptide that is removed on maturation; the sequence is ADDSTDKQEYRAVKLRDAMRNFKGSKR. Disulfide bonds link Cys-50/Cys-63, Cys-57/Cys-68, and Cys-62/Cys-77.

It belongs to the conotoxin O1 superfamily. As to expression, expressed by the venom duct.

The protein resides in the secreted. This is Conotoxin ArMKLT2-0321 from Conus arenatus (Sand-dusted cone).